Consider the following 293-residue polypeptide: 4-hydroxy-tetrahydrodipicolinate synthase (293 aa).

T47 lines the pyruvate pocket. Y135 serves as the catalytic Proton donor/acceptor. K163 (schiff-base intermediate with substrate) is an active-site residue. Residue I204 participates in pyruvate binding.

This sequence belongs to the DapA family. In terms of assembly, homotetramer; dimer of dimers.

It is found in the cytoplasm. It catalyses the reaction L-aspartate 4-semialdehyde + pyruvate = (2S,4S)-4-hydroxy-2,3,4,5-tetrahydrodipicolinate + H2O + H(+). Its pathway is amino-acid biosynthesis; L-lysine biosynthesis via DAP pathway; (S)-tetrahydrodipicolinate from L-aspartate: step 3/4. Its function is as follows. Catalyzes the condensation of (S)-aspartate-beta-semialdehyde [(S)-ASA] and pyruvate to 4-hydroxy-tetrahydrodipicolinate (HTPA). The chain is 4-hydroxy-tetrahydrodipicolinate synthase from Brachyspira hyodysenteriae (strain ATCC 49526 / WA1).